The primary structure comprises 654 residues: Acetyl-coenzyme A synthetase (654 aa).

CoA-binding positions include 190-193 (RGGK) and T313. ATP is bound by residues 389-391 (GEP), 413-418 (DTWWQT), D504, and R519. S527 contacts CoA. Residue R530 participates in ATP binding. Positions 541, 543, and 546 each coordinate Mg(2+). The residue at position 613 (K613) is an N6-acetyllysine.

This sequence belongs to the ATP-dependent AMP-binding enzyme family. Requires Mg(2+) as cofactor. Post-translationally, acetylated. Deacetylation by the SIR2-homolog deacetylase activates the enzyme.

It catalyses the reaction acetate + ATP + CoA = acetyl-CoA + AMP + diphosphate. Its function is as follows. Catalyzes the conversion of acetate into acetyl-CoA (AcCoA), an essential intermediate at the junction of anabolic and catabolic pathways. AcsA undergoes a two-step reaction. In the first half reaction, AcsA combines acetate with ATP to form acetyl-adenylate (AcAMP) intermediate. In the second half reaction, it can then transfer the acetyl group from AcAMP to the sulfhydryl group of CoA, forming the product AcCoA. The chain is Acetyl-coenzyme A synthetase from Leptospira biflexa serovar Patoc (strain Patoc 1 / Ames).